Here is a 316-residue protein sequence, read N- to C-terminus: uncharacterized protein (316 aa).

The Cytoplasmic portion of the chain corresponds to 1–70 (SFAYSGNSES…NNDEIGIWNY (70 aa)). A helical membrane pass occupies residues 71–91 (ISVAEMGGVLLFLSYWIWTCL). A topological domain (lumenal) is located at residue H92. A helical membrane pass occupies residues 93–113 (FSKIIFPAQKVICLYIFLFAL). The Cytoplasmic portion of the chain corresponds to 114–170 (NQTLQECIEEYVFSSECIKYRQFYSVYEIIDFLRTNFYRLFVIYCALGFGITRTVPK). Residues 171 to 191 (YLMIKGISIVIALCSVYWISL) traverse the membrane as a helical segment. At 192-194 (YKD) the chain is on the lumenal side. Residues 195 to 215 (VYVVSEIFDMIQYEVSPAIWV) form a helical membrane-spanning segment. The Cytoplasmic portion of the chain corresponds to 216–245 (YSICHLLKQCTSVTTYENASKARFFRRMLN). Residues 246 to 266 (AFIFIFCASPMLHYLSNIIFG) form a helical membrane-spanning segment. Over 267–316 (NFDYRLSVIIGDLFTFMEKIAFPCYIMFPTHNEALAYNRNVAEEAQEKMI) the chain is Lumenal.

The protein belongs to the UPF0742 family.

It is found in the endoplasmic reticulum. The protein resides in the membrane. This is an uncharacterized protein from Schizosaccharomyces pombe (strain 972 / ATCC 24843) (Fission yeast).